The sequence spans 987 residues: Rho GTPase-activating protein 6 (987 aa).

A compositionally biased stretch (polar residues) spans 1–21 (MSAQSLLHSVFSCSSPASGGT). Disordered stretches follow at residues 1-60 (MSAQ…RGST), 76-117 (SRLA…SGSF), and 144-170 (GSGS…IFSS). S37 is subject to Phosphoserine. The segment covering 44-57 (GGCGSEMGAEGGLR) has biased composition (gly residues). Over residues 100–115 (SSFSTPSTPQEKSPSG) the composition is skewed to polar residues. Low complexity predominate over residues 144–159 (GSGSASSRSPASILSS). S265 carries the post-translational modification Phosphoserine. Positions 324-363 (KQNKELSSSNSSLSSTSETPNESTSPNTPEPAPRARRRGA) are disordered. Residues 328–350 (ELSSSNSSLSSTSETPNESTSPN) show a composition bias toward low complexity. The short motif at 344 to 354 (NESTSPNTPEP) is the SH3-binding element. The residue at position 365 (S365) is a Phosphoserine. The 202-residue stretch at 403-604 (LSLNPIYRQV…KMIENYEALF (202 aa)) folds into the Rho-GAP domain. A disordered region spans residues 641 to 676 (DILQTEVSFSMGGRHSSTDSNKASSGDISPYDNNSP). A compositionally biased stretch (polar residues) spans 658 to 676 (TDSNKASSGDISPYDNNSP). Phosphoserine is present on residues S669, S675, S682, S713, S758, S776, S781, S790, and S824. Residues 709–731 (GHLSSPKSKSRESSPGPRLGKEM) form a disordered region. 2 disordered regions span residues 825–847 (TPHI…PFLS) and 863–953 (WLQS…QDKQ). Over residues 939 to 948 (LSSAYSLSAS) the composition is skewed to low complexity. Phosphoserine is present on residues S941 and S944.

As to expression, expressed in retina and lung.

It localises to the cytoplasm. GTPase activator for the Rho-type GTPases by converting them to an inactive GDP-bound state. Could regulate the interactions of signaling molecules with the actin cytoskeleton. Promotes continuous elongation of cytoplasmic processes during cell motility and simultaneous retraction of the cell body changing the cell morphology. The chain is Rho GTPase-activating protein 6 (Arhgap6) from Mus musculus (Mouse).